A 243-amino-acid chain; its full sequence is Triosephosphate isomerase (243 aa).

A substrate-binding site is contributed by 9–11 (NWK). The active-site Electrophile is the His-98. The active-site Proton acceptor is Glu-167. Residues Gly-173, Ser-205, and 226-227 (GG) each bind substrate.

It belongs to the triosephosphate isomerase family. In terms of assembly, homodimer.

It localises to the cytoplasm. The catalysed reaction is D-glyceraldehyde 3-phosphate = dihydroxyacetone phosphate. Its pathway is carbohydrate biosynthesis; gluconeogenesis. It functions in the pathway carbohydrate degradation; glycolysis; D-glyceraldehyde 3-phosphate from glycerone phosphate: step 1/1. Involved in the gluconeogenesis. Catalyzes stereospecifically the conversion of dihydroxyacetone phosphate (DHAP) to D-glyceraldehyde-3-phosphate (G3P). The protein is Triosephosphate isomerase of Mesomycoplasma hyorhinis (Mycoplasma hyorhinis).